A 126-amino-acid polypeptide reads, in one-letter code: Large ribosomal subunit protein uL22c (126 aa).

The protein belongs to the universal ribosomal protein uL22 family. In terms of assembly, part of the 50S ribosomal subunit.

The protein resides in the plastid. It is found in the chloroplast. In terms of biological role, this protein binds specifically to 23S rRNA. The globular domain of the protein is located near the polypeptide exit tunnel on the outside of the subunit, while an extended beta-hairpin is found that lines the wall of the exit tunnel in the center of the 70S ribosome. The protein is Large ribosomal subunit protein uL22c (rpl22) of Cryptomeria japonica (Japanese cedar).